The following is a 128-amino-acid chain: Large ribosomal subunit protein bL12 (128 aa).

It belongs to the bacterial ribosomal protein bL12 family. Homodimer. Part of the ribosomal stalk of the 50S ribosomal subunit. Forms a multimeric L10(L12)X complex, where L10 forms an elongated spine to which 2 to 4 L12 dimers bind in a sequential fashion. Binds GTP-bound translation factors.

Forms part of the ribosomal stalk which helps the ribosome interact with GTP-bound translation factors. Is thus essential for accurate translation. In Synechococcus sp. (strain CC9311), this protein is Large ribosomal subunit protein bL12.